Reading from the N-terminus, the 344-residue chain is Phosphoribosylformylglycinamidine cyclo-ligase (344 aa).

The protein belongs to the AIR synthase family.

Its subcellular location is the cytoplasm. It carries out the reaction 2-formamido-N(1)-(5-O-phospho-beta-D-ribosyl)acetamidine + ATP = 5-amino-1-(5-phospho-beta-D-ribosyl)imidazole + ADP + phosphate + H(+). It functions in the pathway purine metabolism; IMP biosynthesis via de novo pathway; 5-amino-1-(5-phospho-D-ribosyl)imidazole from N(2)-formyl-N(1)-(5-phospho-D-ribosyl)glycinamide: step 2/2. This is Phosphoribosylformylglycinamidine cyclo-ligase from Neisseria gonorrhoeae (strain ATCC 700825 / FA 1090).